The sequence spans 321 residues: tRNA-dihydrouridine synthase B (321 aa).

FMN contacts are provided by residues 16 to 18 and Gln70; that span reads PMA. Cys100 (proton donor) is an active-site residue. FMN is bound by residues Lys139, 200–202, and 224–225; these read NGD and GR.

Belongs to the Dus family. DusB subfamily. Requires FMN as cofactor.

It catalyses the reaction a 5,6-dihydrouridine in tRNA + NAD(+) = a uridine in tRNA + NADH + H(+). The enzyme catalyses a 5,6-dihydrouridine in tRNA + NADP(+) = a uridine in tRNA + NADPH + H(+). Its function is as follows. Catalyzes the synthesis of 5,6-dihydrouridine (D), a modified base found in the D-loop of most tRNAs, via the reduction of the C5-C6 double bond in target uridines. This is tRNA-dihydrouridine synthase B from Klebsiella pneumoniae.